A 210-amino-acid polypeptide reads, in one-letter code: Chaperone protein TorD (210 aa).

Belongs to the TorD/DmsD family. TorD subfamily.

It localises to the cytoplasm. In terms of biological role, involved in the biogenesis of TorA. Acts on TorA before the insertion of the molybdenum cofactor and, as a result, probably favors a conformation of the apoenzyme that is competent for acquiring the cofactor. The chain is Chaperone protein TorD from Salmonella choleraesuis (strain SC-B67).